The sequence spans 438 residues: Glutamyl-tRNA(Gln) amidotransferase subunit D (438 aa).

Residues 91–421 (KNLSILSTGG…SEIYEIMKTN (331 aa)) enclose the Asparaginase/glutaminase domain. Residues Thr101, Thr177, Asp178, and Lys254 contribute to the active site.

The protein belongs to the asparaginase 1 family. GatD subfamily. Heterodimer of GatD and GatE.

It catalyses the reaction L-glutamyl-tRNA(Gln) + L-glutamine + ATP + H2O = L-glutaminyl-tRNA(Gln) + L-glutamate + ADP + phosphate + H(+). Its function is as follows. Allows the formation of correctly charged Gln-tRNA(Gln) through the transamidation of misacylated Glu-tRNA(Gln) in organisms which lack glutaminyl-tRNA synthetase. The reaction takes place in the presence of glutamine and ATP through an activated gamma-phospho-Glu-tRNA(Gln). The GatDE system is specific for glutamate and does not act on aspartate. The sequence is that of Glutamyl-tRNA(Gln) amidotransferase subunit D from Methanosphaera stadtmanae (strain ATCC 43021 / DSM 3091 / JCM 11832 / MCB-3).